A 305-amino-acid polypeptide reads, in one-letter code: Ribonucleoside-diphosphate reductase small subunit (305 aa).

Positions 64, 94, and 97 each coordinate Fe cation. Tyr-101 is an active-site residue. Residues 150 to 170 traverse the membrane as a helical segment; that stretch reads VLVFLLIEGIFFISSFYSIAT. The Fe cation site is built by Glu-157, Glu-191, and His-194.

The protein belongs to the ribonucleoside diphosphate reductase small chain family. In terms of assembly, heterotetramer composed of a homodimer of the large subunit (R1) and a homodimer of the small subunit (R2). Larger multisubunit protein complex are also active, composed of (R1)n(R2)n. It depends on Fe cation as a cofactor.

The protein localises to the host membrane. The enzyme catalyses a 2'-deoxyribonucleoside 5'-diphosphate + [thioredoxin]-disulfide + H2O = a ribonucleoside 5'-diphosphate + [thioredoxin]-dithiol. Functionally, ribonucleoside-diphosphate reductase holoenzyme provides the precursors necessary for viral DNA synthesis. Allows virus growth in non-dividing cells, as well as reactivation from latency in infected hosts. Catalyzes the biosynthesis of deoxyribonucleotides from the corresponding ribonucleotides. This is Ribonucleoside-diphosphate reductase small subunit from Equus caballus (Horse).